The sequence spans 576 residues: Polypeptide N-acetylgalactosaminyltransferase 12 (576 aa).

The Cytoplasmic portion of the chain corresponds to 1–19 (MWGRAVRRRCPRGLRRGRE). The helical; Signal-anchor for type II membrane protein transmembrane segment at 20–37 (ALLALLALAGLGALLRAR) threads the bilayer. The interval 38–58 (SRSGTVDPGPPRTPLPGRHEP) is disordered. Residues 38–576 (SRSGTVDPGP…QRWFFKERMS (539 aa)) are Lumenal-facing. Disulfide bonds link Cys-120–Cys-353, Cys-344–Cys-417, Cys-453–Cys-474, Cys-501–Cys-516, and Cys-542–Cys-561. Residues 130 to 239 (LPKTSVVIAF…EGWLEPLLQR (110 aa)) form a catalytic subdomain A region. Positions 171 and 200 each coordinate substrate. Positions 223 and 225 each coordinate Mn(2+). The segment at 299-361 (VIRSPTMAGG…PCSHVGHVFP (63 aa)) is catalytic subdomain B. A substrate-binding site is contributed by Trp-330. His-358 contributes to the Mn(2+) binding site. Tyr-366 provides a ligand contact to substrate. In terms of domain architecture, Ricin B-type lectin spans 440 to 572 (FFGMLQNRGL…NSDNQRWFFK (133 aa)).

The protein belongs to the glycosyltransferase 2 family. GalNAc-T subfamily. Mn(2+) serves as cofactor.

The protein resides in the golgi apparatus membrane. It carries out the reaction L-seryl-[protein] + UDP-N-acetyl-alpha-D-galactosamine = a 3-O-[N-acetyl-alpha-D-galactosaminyl]-L-seryl-[protein] + UDP + H(+). The enzyme catalyses L-threonyl-[protein] + UDP-N-acetyl-alpha-D-galactosamine = a 3-O-[N-acetyl-alpha-D-galactosaminyl]-L-threonyl-[protein] + UDP + H(+). It functions in the pathway protein modification; protein glycosylation. Catalyzes the initial reaction in O-linked oligosaccharide biosynthesis, the transfer of an N-acetyl-D-galactosamine residue to a serine or threonine residue on the protein receptor. Has activity toward non-glycosylated peptides such as Muc5AC, Muc1a and EA2, and no detectable activity with Muc2 and Muc7. Displays enzymatic activity toward the Gal-NAc-Muc5AC glycopeptide, but no detectable activity to mono-GalNAc-glycosylated Muc1a, Muc2, Muc7 and EA2. May play an important role in the initial step of mucin-type oligosaccharide biosynthesis in digestive organs. The sequence is that of Polypeptide N-acetylgalactosaminyltransferase 12 (Galnt12) from Mus musculus (Mouse).